A 369-amino-acid polypeptide reads, in one-letter code: Actin-related protein 2/3 complex subunit 1B-A (369 aa).

7 WD repeats span residues 6–45 (FLLE…WSKI), 50–89 (EHNG…WKPT), 94–135 (RINR…WVCK), 140–179 (PIRS…VEER), 200–239 (SSCG…RVTS), 242–282 (TDTL…LSFG), and 321–364 (LHKN…SAMK).

The protein belongs to the WD repeat ARPC1 family. As to quaternary structure, component of the Arp2/3 complex composed of actr2/arp2, actr3/arp3, arpc1 (arpc1a or arpc1b), arpc2, arpc3, arpc4 and arpc5.

The protein localises to the cytoplasm. It localises to the cytoskeleton. The protein resides in the nucleus. Functionally, component of the Arp2/3 complex, a multiprotein complex that mediates actin polymerization upon stimulation by nucleation-promoting factor (NPF). The Arp2/3 complex mediates the formation of branched actin networks in the cytoplasm, providing the force for cell motility. In addition to its role in the cytoplasmic cytoskeleton, the Arp2/3 complex also promotes actin polymerization in the nucleus, thereby regulating gene transcription and repair of damaged DNA. The Arp2/3 complex promotes homologous recombination (HR) repair in response to DNA damage by promoting nuclear actin polymerization, leading to drive motility of double-strand breaks (DSBs). The polypeptide is Actin-related protein 2/3 complex subunit 1B-A (arpc1b-a) (Xenopus laevis (African clawed frog)).